The sequence spans 77 residues: DNA-directed RNA polymerase subunit omega (77 aa).

The protein belongs to the RNA polymerase subunit omega family. In terms of assembly, in cyanobacteria the RNAP catalytic core is composed of 2 alpha, 1 beta, 1 beta', 1 gamma and 1 omega subunit. When a sigma factor is associated with the core the holoenzyme is formed, which can initiate transcription.

It carries out the reaction RNA(n) + a ribonucleoside 5'-triphosphate = RNA(n+1) + diphosphate. Its function is as follows. Promotes RNA polymerase assembly. Latches the N- and C-terminal regions of the beta' subunit thereby facilitating its interaction with the beta and alpha subunits. In Thermosynechococcus vestitus (strain NIES-2133 / IAM M-273 / BP-1), this protein is DNA-directed RNA polymerase subunit omega.